A 70-amino-acid polypeptide reads, in one-letter code: Small ribosomal subunit protein bS21 (70 aa).

The protein belongs to the bacterial ribosomal protein bS21 family.

The polypeptide is Small ribosomal subunit protein bS21 (Albidiferax ferrireducens (strain ATCC BAA-621 / DSM 15236 / T118) (Rhodoferax ferrireducens)).